A 284-amino-acid polypeptide reads, in one-letter code: MALPVNKRVPKILFILFVVAFCVYLVPRVAINFFYYPDDKIYGPDPWSAESVEFTAKDGTRLQGWFIPSSTGPADNAIATIIHAHGNAGNMSAHWPLVSWLPERNFNVFMFDYRGFGKSKGTPSQAGLLDDTQSAINVVRHRSDVNPQRLVLFGQSIGGANILDVIGRGDREGIRAVILDSTFASYATIANQMIPGSGYLLDESYSGENYIASVSPIPLLLIHGKADHVIPWQHSEKLYSLAKEPKRLILIPDGEHIDAFSDRHGDVYREQMVDFILSALNPQN.

Residues 12–32 (ILFILFVVAFCVYLVPRVAIN) form a helical membrane-spanning segment.

The protein belongs to the serine esterase family.

It is found in the membrane. This is an uncharacterized protein from Escherichia coli (strain K12).